Here is an 824-residue protein sequence, read N- to C-terminus: Mucosa-associated lymphoid tissue lymphoma translocation protein 1 (824 aa).

The segment at 1 to 27 is disordered; the sequence is MSLLGDPLQALPPSAAPTGPLLAPPAG. Position 2 is an N-acetylserine (S2). The segment covering 11–27 has biased composition (low complexity); sequence LPPSAAPTGPLLAPPAG. Positions 39–126 constitute a Death domain; that stretch reads RRLSELLDQA…EVLQLLSPPG (88 aa). 2 Ig-like C2-type domains span residues 125–201 and 212–305; these read PGIK…FEFS and PESF…KKVE. S135 bears the Phosphoserine mark. Disulfide bonds link C147-C190 and C248-C290. The segment at 348 to 562 is caspase-like; the sequence is IGNMNYREHP…SLSEKRALTD (215 aa). Residues 369 to 376 carry the Nuclear export signal motif; it reads LTNLLRQL. Active-site residues include H415 and C464.

This sequence belongs to the peptidase C14B family. In terms of assembly, homooligomer; forms oligomers which bind to TRAF6. Forms a complex with CARD14 and MALT1; resulting in the formation of a CBM (CARD14-BCL10-MALT1) complex. Forms a complex with CARD11 and MALT1; resulting in the formation of a CBM (CARD11-BCL10-MALT1) complex. Forms a complex with CARD9 and MALT1; resulting in the formation of a CBM (CARD9-BCL10-MALT1) complex. In terms of tissue distribution, highly expressed in peripheral blood mononuclear cells. Detected at lower levels in bone marrow, thymus and lymph node, and at very low levels in colon and lung.

It localises to the cytoplasm. Its subcellular location is the perinuclear region. The protein resides in the nucleus. Its function is as follows. Protease that enhances BCL10-induced activation: acts via formation of CBM complexes that channel adaptive and innate immune signaling downstream of CARD domain-containing proteins (CARD9, CARD11 and CARD14) to activate NF-kappa-B and MAP kinase p38 pathways which stimulate expression of genes encoding pro-inflammatory cytokines and chemokines. Mediates BCL10 cleavage: MALT1-dependent BCL10 cleavage plays an important role in T-cell antigen receptor-induced integrin adhesion. Involved in the induction of T helper 17 cells (Th17) differentiation. Cleaves RC3H1 and ZC3H12A in response to T-cell receptor (TCR) stimulation which releases their cooperatively repressed targets to promote Th17 cell differentiation. Also mediates cleavage of N4BP1 in T-cells following TCR-mediated activation, leading to N4BP1 inactivation. May also have ubiquitin ligase activity: binds to TRAF6, inducing TRAF6 oligomerization and activation of its ligase activity. The chain is Mucosa-associated lymphoid tissue lymphoma translocation protein 1 from Homo sapiens (Human).